A 573-amino-acid polypeptide reads, in one-letter code: Phosphoenolpyruvate-protein phosphotransferase (573 aa).

His190 (tele-phosphohistidine intermediate) is an active-site residue. Residues Arg297 and Arg332 each coordinate phosphoenolpyruvate. Positions 431 and 455 each coordinate Mg(2+). Residues 454–455 and Arg465 contribute to the phosphoenolpyruvate site; that span reads ND. Catalysis depends on Cys502, which acts as the Proton donor.

It belongs to the PEP-utilizing enzyme family. As to quaternary structure, homodimer. The cofactor is Mg(2+).

The protein resides in the cytoplasm. The catalysed reaction is L-histidyl-[protein] + phosphoenolpyruvate = N(pros)-phospho-L-histidyl-[protein] + pyruvate. Its activity is regulated as follows. Irreversibly inhibited the sulfhydryl reagent N-ethylmaleimide (NEM). In terms of biological role, general (non sugar-specific) component of the phosphoenolpyruvate-dependent sugar phosphotransferase system (sugar PTS). This major carbohydrate active-transport system catalyzes the phosphorylation of incoming sugar substrates concomitantly with their translocation across the cell membrane. Enzyme I transfers the phosphoryl group from phosphoenolpyruvate (PEP) to the phosphoryl carrier protein (HPr). In Mycoplasma capricolum subsp. capricolum (strain California kid / ATCC 27343 / NCTC 10154), this protein is Phosphoenolpyruvate-protein phosphotransferase (ptsI).